The following is a 317-amino-acid chain: Ribosomal RNA small subunit methyltransferase H (317 aa).

S-adenosyl-L-methionine-binding positions include 37 to 39, Asp56, Phe85, Asp106, and Gln113; that span reads AGH.

This sequence belongs to the methyltransferase superfamily. RsmH family.

It is found in the cytoplasm. It carries out the reaction cytidine(1402) in 16S rRNA + S-adenosyl-L-methionine = N(4)-methylcytidine(1402) in 16S rRNA + S-adenosyl-L-homocysteine + H(+). Specifically methylates the N4 position of cytidine in position 1402 (C1402) of 16S rRNA. This chain is Ribosomal RNA small subunit methyltransferase H, found in Lactococcus lactis subsp. cremoris (strain SK11).